Reading from the N-terminus, the 870-residue chain is DNA mismatch repair protein MutS (870 aa).

629–636 provides a ligand contact to ATP; it reads GPNMGGKS.

It belongs to the DNA mismatch repair MutS family.

This protein is involved in the repair of mismatches in DNA. It is possible that it carries out the mismatch recognition step. This protein has a weak ATPase activity. The chain is DNA mismatch repair protein MutS from Polaromonas naphthalenivorans (strain CJ2).